The primary structure comprises 176 residues: Photosystem I assembly protein Ycf4 (176 aa).

2 helical membrane passes run phenylalanine 22–serine 42 and valine 57–phenylalanine 77.

The protein belongs to the Ycf4 family.

The protein resides in the plastid thylakoid membrane. Its function is as follows. Seems to be required for the assembly of the photosystem I complex. The polypeptide is Photosystem I assembly protein Ycf4 (Cuscuta obtusiflora (Peruvian dodder)).